The following is an 831-amino-acid chain: Prickle-like protein 1 (831 aa).

One can recognise a PET domain in the interval 14 to 122 (FGCQRSSTSD…TIKLLSRAMM (109 aa)). LIM zinc-binding domains are found at residues 124 to 189 (AVCE…LLKP), 189 to 249 (PRCS…LYAE), and 249 to 313 (EYCE…EDIH). A disordered region spans residues 314–346 (ASDSSDSAFQSARSRDSRRSVRMGRSSRSADQC). Phosphoserine is present on residues Ser315, Ser591, and Ser594. 2 disordered regions span residues 664–688 (EERGSRPHHHRHRRSRKSRSDNALN) and 763–831 (CSSS…CIIS). Residues 669 to 680 (RPHHHRHRRSRK) are compositionally biased toward basic residues. A Phosphoserine modification is found at Ser683. Positions 797 to 812 (DLSSPASALPTPQFNQ) are enriched in polar residues. Basic residues predominate over residues 815–831 (TKSKKKKGHRGKNCIIS). Cys828 carries the post-translational modification Cysteine methyl ester. Cys828 carries S-farnesyl cysteine lipidation. Positions 829–831 (IIS) are cleaved as a propeptide — removed in mature form.

This sequence belongs to the prickle / espinas / testin family. In terms of assembly, interacts with REST.

The protein localises to the nucleus membrane. The protein resides in the cytoplasm. It is found in the cytosol. Functionally, involved in the planar cell polarity pathway that controls convergent extension during gastrulation and neural tube closure. Convergent extension is a complex morphogenetic process during which cells elongate, move mediolaterally, and intercalate between neighboring cells, leading to convergence toward the mediolateral axis and extension along the anteroposterior axis. Necessary for nuclear localization of REST. May serve as nuclear receptor. The sequence is that of Prickle-like protein 1 (Prickle1) from Rattus norvegicus (Rat).